Reading from the N-terminus, the 465-residue chain is ATP synthase subunit beta (465 aa).

152-159 (GGAGVGKT) contacts ATP.

It belongs to the ATPase alpha/beta chains family. F-type ATPases have 2 components, CF(1) - the catalytic core - and CF(0) - the membrane proton channel. CF(1) has five subunits: alpha(3), beta(3), gamma(1), delta(1), epsilon(1). CF(0) has three main subunits: a(1), b(2) and c(9-12). The alpha and beta chains form an alternating ring which encloses part of the gamma chain. CF(1) is attached to CF(0) by a central stalk formed by the gamma and epsilon chains, while a peripheral stalk is formed by the delta and b chains.

It localises to the cell inner membrane. The enzyme catalyses ATP + H2O + 4 H(+)(in) = ADP + phosphate + 5 H(+)(out). Produces ATP from ADP in the presence of a proton gradient across the membrane. The catalytic sites are hosted primarily by the beta subunits. The sequence is that of ATP synthase subunit beta from Campylobacter curvus (strain 525.92).